A 364-amino-acid chain; its full sequence is Alanine racemase (364 aa).

Lys-34 functions as the Proton acceptor; specific for D-alanine in the catalytic mechanism. Residue Lys-34 is modified to N6-(pyridoxal phosphate)lysine. Arg-129 provides a ligand contact to substrate. Catalysis depends on Tyr-259, which acts as the Proton acceptor; specific for L-alanine. Residue Met-307 coordinates substrate.

This sequence belongs to the alanine racemase family. Pyridoxal 5'-phosphate serves as cofactor.

It catalyses the reaction L-alanine = D-alanine. It participates in amino-acid biosynthesis; D-alanine biosynthesis; D-alanine from L-alanine: step 1/1. In terms of biological role, catalyzes the interconversion of L-alanine and D-alanine. May also act on other amino acids. In Coxiella burnetii (strain Dugway 5J108-111), this protein is Alanine racemase (alr).